A 211-amino-acid chain; its full sequence is Uracil phosphoribosyltransferase (211 aa).

Residues Arg79, Arg104, and Asp131–Ser139 contribute to the 5-phospho-alpha-D-ribose 1-diphosphate site. Residues Ile196 and Gly201–Ala203 contribute to the uracil site. Asp202 serves as a coordination point for 5-phospho-alpha-D-ribose 1-diphosphate.

The protein belongs to the UPRTase family. Requires Mg(2+) as cofactor.

It catalyses the reaction UMP + diphosphate = 5-phospho-alpha-D-ribose 1-diphosphate + uracil. It functions in the pathway pyrimidine metabolism; UMP biosynthesis via salvage pathway; UMP from uracil: step 1/1. With respect to regulation, allosterically activated by GTP. Functionally, catalyzes the conversion of uracil and 5-phospho-alpha-D-ribose 1-diphosphate (PRPP) to UMP and diphosphate. This is Uracil phosphoribosyltransferase from Lactococcus lactis subsp. lactis (strain IL1403) (Streptococcus lactis).